We begin with the raw amino-acid sequence, 780 residues long: LPS-assembly protein LptD (780 aa).

The signal sequence occupies residues 1–24 (MKKRLPTLLASLIGSALYSQQALA).

This sequence belongs to the LptD family. In terms of assembly, component of the lipopolysaccharide transport and assembly complex. Interacts with LptE and LptA.

The protein resides in the cell outer membrane. Its function is as follows. Together with LptE, is involved in the assembly of lipopolysaccharide (LPS) at the surface of the outer membrane. The polypeptide is LPS-assembly protein LptD (Sodalis glossinidius (strain morsitans)).